A 592-amino-acid polypeptide reads, in one-letter code: Cryptochrome-2 (592 aa).

A Photolyase/cryptochrome alpha/beta domain is found at 21-150 (ASSVHWFRKG…EVVTENSHTL (130 aa)). K29 participates in a covalent cross-link: Glycyl lysine isopeptide (Lys-Gly) (interchain with G-Cter in ubiquitin). Position 89 is a phosphoserine (S89). Residues K125 and K241 each participate in a glycyl lysine isopeptide (Lys-Gly) (interchain with G-Cter in ubiquitin) cross-link. S265 carries the post-translational modification Phosphoserine; by MAPK. S270 provides a ligand contact to FAD. S298 carries the post-translational modification Phosphoserine. FAD is bound at residue Q307. K347 is covalently cross-linked (Glycyl lysine isopeptide (Lys-Gly) (interchain with G-Cter in ubiquitin)). FAD contacts are provided by residues H373 and 405–407 (DAD). The tract at residues 389-488 (WVSWESGVRV…IIGVDYPRPI (100 aa)) is required for inhibition of CLOCK-BMAL1-mediated transcription. Residues K474 and K503 each participate in a glycyl lysine isopeptide (Lys-Gly) (interchain with G-Cter in ubiquitin) cross-link. Positions 532–592 (VAEPGSSQAG…PTQEPASKDS (61 aa)) are disordered. Polar residues predominate over residues 536–547 (GSSQAGSISNTG). A Phosphoserine; by GSK3-beta modification is found at S553. The residue at position 557 (S557) is a Phosphoserine; by DYRK1A and MAPK. Residues 582–592 (MPTQEPASKDS) are compositionally biased toward polar residues.

It belongs to the DNA photolyase class-1 family. In terms of assembly, component of the circadian core oscillator, which includes the CRY proteins, CLOCK or NPAS2, BMAL1 or BMAL2, CSNK1D and/or CSNK1E, TIMELESS, and the PER proteins. Interacts with TIMELESS. Interacts directly with PER1, PER2 and PER3; interaction with PER2 inhibits its ubiquitination and vice versa. Interacts with CLOCK-BMAL1. Interacts with BMAL1. Interacts with CLOCK. Interacts with NFIL3. Interacts with FBXL3 and FBXL21. FBXL3, PER2 and the cofactor FAD compete for overlapping binding sites. FBXL3 cannot bind CRY2 that interacts already with PER2 or that contains bound FAD. Interacts with PPP5C (via TPR repeats); the interaction down-regulates the PPP5C phosphatase activity on CSNK1E. Interacts with nuclear receptors AR and NR3C1/GR; the interaction is ligand dependent. Interacts with PRKDC. Interacts with CIART. Interacts with DDB1, USP7 and TARDBP. Interacts with HNF4A. Interacts with PPARA. Interacts with PPARG in a ligand-dependent manner. Interacts with PPARD (via domain NR LBD) in a ligand-dependent manner. Interacts with NR1I2 (via domain NR LBD) in a ligand-dependent manner. Interacts with NR1I3 and VDR in a ligand-dependent manner. FAD serves as cofactor. (6R)-5,10-methylene-5,6,7,8-tetrahydrofolate is required as a cofactor. Post-translationally, phosphorylation on Ser-265 by MAPK is important for the inhibition of CLOCK-BMAL1-mediated transcriptional activity. Phosphorylation by CSKNE requires interaction with PER1 or PER2. Phosphorylated in a circadian manner at Ser-553 and Ser-557 in the suprachiasmatic nucleus (SCN) and liver. Phosphorylation at Ser-557 by DYRK1A promotes subsequent phosphorylation at Ser-553 by GSK3-beta: the two-step phosphorylation at the neighboring Ser residues leads to its proteasomal degradation. In terms of processing, ubiquitinated by the SCF(FBXL3) and SCF(FBXL21) complexes, regulating the balance between degradation and stabilization. The SCF(FBXL3) complex is mainly nuclear and mediates ubiquitination and subsequent degradation of CRY2. In contrast, cytoplasmic SCF(FBXL21) complex-mediated ubiquitination leads to stabilize CRY2 and counteract the activity of the SCF(FBXL3) complex. The SCF(FBXL3) and SCF(FBXL21) complexes probably mediate ubiquitination at different Lys residues. The SCF(FBXL3) complex recognizes and binds CRY2 phosphorylated at Ser-553 and Ser-557. Ubiquitination may be inhibited by PER2. Deubiquitinated by USP7. In terms of tissue distribution, expression in the retina is restricted to the photoreceptor layer (at protein level). Expressed in all tissues examined including heart, brain, spleen, lung, liver, skeletal muscle, kidney and testis. Weak expression in spleen.

The protein localises to the cytoplasm. The protein resides in the nucleus. Its activity is regulated as follows. KL001 (N-[3-(9H-carbazol-9-yl)-2-hydroxypropyl]-N-(2-furanylmethyl)-methanesulfonamide) binds to CRY1 and stabilizes it by inhibiting FBXL3- and ubiquitin-dependent degradation of CRY1 resulting in lengthening of the circadian periods. KL001-mediated CRY1 stabilization can inhibit glucagon-induced gluconeogenesis in primary hepatocytes. In terms of biological role, transcriptional repressor which forms a core component of the circadian clock. The circadian clock, an internal time-keeping system, regulates various physiological processes through the generation of approximately 24 hour circadian rhythms in gene expression, which are translated into rhythms in metabolism and behavior. It is derived from the Latin roots 'circa' (about) and 'diem' (day) and acts as an important regulator of a wide array of physiological functions including metabolism, sleep, body temperature, blood pressure, endocrine, immune, cardiovascular, and renal function. Consists of two major components: the central clock, residing in the suprachiasmatic nucleus (SCN) of the brain, and the peripheral clocks that are present in nearly every tissue and organ system. Both the central and peripheral clocks can be reset by environmental cues, also known as Zeitgebers (German for 'timegivers'). The predominant Zeitgeber for the central clock is light, which is sensed by retina and signals directly to the SCN. The central clock entrains the peripheral clocks through neuronal and hormonal signals, body temperature and feeding-related cues, aligning all clocks with the external light/dark cycle. Circadian rhythms allow an organism to achieve temporal homeostasis with its environment at the molecular level by regulating gene expression to create a peak of protein expression once every 24 hours to control when a particular physiological process is most active with respect to the solar day. Transcription and translation of core clock components (CLOCK, NPAS2, BMAL1, BMAL2, PER1, PER2, PER3, CRY1 and CRY2) plays a critical role in rhythm generation, whereas delays imposed by post-translational modifications (PTMs) are important for determining the period (tau) of the rhythms (tau refers to the period of a rhythm and is the length, in time, of one complete cycle). A diurnal rhythm is synchronized with the day/night cycle, while the ultradian and infradian rhythms have a period shorter and longer than 24 hours, respectively. Disruptions in the circadian rhythms contribute to the pathology of cardiovascular diseases, cancer, metabolic syndromes and aging. A transcription/translation feedback loop (TTFL) forms the core of the molecular circadian clock mechanism. Transcription factors, CLOCK or NPAS2 and BMAL1 or BMAL2, form the positive limb of the feedback loop, act in the form of a heterodimer and activate the transcription of core clock genes and clock-controlled genes (involved in key metabolic processes), harboring E-box elements (5'-CACGTG-3') within their promoters. The core clock genes: PER1/2/3 and CRY1/2 which are transcriptional repressors form the negative limb of the feedback loop and interact with the CLOCK|NPAS2-BMAL1|BMAL2 heterodimer inhibiting its activity and thereby negatively regulating their own expression. This heterodimer also activates nuclear receptors NR1D1/2 and RORA/B/G, which form a second feedback loop and which activate and repress BMAL1 transcription, respectively. CRY1 and CRY2 have redundant functions but also differential and selective contributions at least in defining the pace of the SCN circadian clock and its circadian transcriptional outputs. Less potent transcriptional repressor in cerebellum and liver than CRY1, though less effective in lengthening the period of the SCN oscillator. Seems to play a critical role in tuning SCN circadian period by opposing the action of CRY1. With CRY1, dispensable for circadian rhythm generation but necessary for the development of intercellular networks for rhythm synchrony. May mediate circadian regulation of cAMP signaling and gluconeogenesis by blocking glucagon-mediated increases in intracellular cAMP concentrations and in CREB1 phosphorylation. Besides its role in the maintenance of the circadian clock, is also involved in the regulation of other processes. Plays a key role in glucose and lipid metabolism modulation, in part, through the transcriptional regulation of genes involved in these pathways, such as LEP or ACSL4. Represses glucocorticoid receptor NR3C1/GR-induced transcriptional activity by binding to glucocorticoid response elements (GREs). Represses the CLOCK-BMAL1 induced transcription of BHLHE40/DEC1 and NAMPT. Represses PPARD and its target genes in the skeletal muscle and limits exercise capacity. Represses the transcriptional activity of NR1I2. The polypeptide is Cryptochrome-2 (Cry2) (Mus musculus (Mouse)).